A 1410-amino-acid polypeptide reads, in one-letter code: Non-secreted LysM effector LysM15 (1410 aa).

LysM domains lie at 1179-1225 (TTYT…DICM) and 1231-1277 (TQYT…EILG). A compositionally biased stretch (low complexity) spans 1291 to 1303 (TTGDGITTTPGNG). The segment at 1291 to 1317 (TTGDGITTTPGNGEYAQGVVSPPENST) is disordered. Positions 1328–1375 (RWYSATADDLCVQICLKSGVSAKLFKAANPSLAADCDNSLIAGDAYCV) constitute a LysM 3 domain.

It belongs to the secreted LysM effector family.

Functionally, non-secreted LysM effector that might be involved in manipulation of host defenses for successful infection. The protein is Non-secreted LysM effector LysM15 of Penicillium expansum (Blue mold rot fungus).